The primary structure comprises 345 residues: PI-PLC X domain-containing protein 1 (345 aa).

The 177-residue stretch at glutamine 52 to alanine 228 folds into the PI-PLC X-box domain.

In terms of tissue distribution, expressed at highest levels in brain and kidney. Also detected in stomach, thymus and skeletal muscle.

The protein resides in the cytoplasm. This is PI-PLC X domain-containing protein 1 (Plcxd1) from Mus musculus (Mouse).